Here is a 2036-residue protein sequence, read N- to C-terminus: Proline-rich protein 12 (2036 aa).

Disordered regions lie at residues 210–283 (GGGV…RALP), 331–587 (CSPL…GAPG), and 649–697 (APSP…DPQR). Positions 223 to 240 (QTPPYRPGPPDPPPPPRH) are enriched in pro residues. Low complexity predominate over residues 249–258 (ASSSAAAAAA). Ser332 and Ser340 each carry phosphoserine. Positions 340 to 365 (SPGAGEPSKAGPSGATAGASGRATGP) are enriched in low complexity. Gly residues-rich tracts occupy residues 367-380 (AAGG…GGGY) and 391-400 (TGKGGYGAAA). Low complexity-rich tracts occupy residues 411 to 432 (STAT…TGKA) and 441 to 458 (QAYS…QAYG). Pro residues predominate over residues 479–490 (PPQPPSGPPPPG). Composition is skewed to polar residues over residues 493–504 (TCQSYSPDQLQG) and 523–537 (GLPT…STGH). Over residues 543-558 (GHGGGWGPSSLGGGGE) the composition is skewed to gly residues. Position 651 is a phosphoserine (Ser651). The span at 673-683 (GLGGSGGAGGP) shows a compositional bias: gly residues. Thr738 carries the post-translational modification Phosphothreonine. Disordered stretches follow at residues 758–850 (AFLQ…PLQL), 859–878 (LEPA…DPPG), 886–925 (ALEP…KAPR), and 952–1068 (EMFG…CSTK). Residues 802–817 (LPSVLSHAPSPSPSAS) show a composition bias toward low complexity. Over residues 833-847 (PQPPPPPPPPPPPMP) the composition is skewed to pro residues. At Ser865 the chain carries Phosphoserine. Residues 1037-1052 (AAPPPPPPPPPPPAPA) show a composition bias toward pro residues. Ser1077 and Ser1135 each carry phosphoserine. Disordered stretches follow at residues 1120 to 1260 (RLPD…SLTR), 1294 to 1347 (RHPP…GGAL), 1376 to 1573 (TLPS…GEGI), and 1668 to 1840 (HRPP…PGRL). The segment covering 1182–1194 (PTTAGPASASTPT) has biased composition (low complexity). The segment covering 1199–1208 (KPRGRGRGRG) has biased composition (basic residues). Residues 1209–1223 (RKAEEAGGTRLEPLK) show a composition bias toward basic and acidic residues. An N6-acetyllysine modification is found at Lys1223. Residues 1239–1257 (GTSSGDAISGTDHNSLDSS) show a composition bias toward polar residues. The residue at position 1304 (Thr1304) is a Phosphothreonine. 2 stretches are compositionally biased toward pro residues: residues 1306 to 1317 (PLSPPKSVPPSV) and 1324 to 1338 (PQPP…PPPS). Residue Ser1308 is modified to Phosphoserine. Residues Ser1381, Ser1382, and Ser1387 each carry the phosphoserine modification. Pro residues-rich tracts occupy residues 1420–1438 (DGPP…PLPG) and 1458–1535 (PPTP…APSP). Residues 1541-1553 (PDTRPLHLAKKQE) show a composition bias toward basic and acidic residues. Phosphothreonine is present on Thr1561. Ser1568 carries the phosphoserine modification. Residues 1691–1703 (APPPKAPAPPPKP) show a composition bias toward pro residues. 2 stretches are compositionally biased toward basic and acidic residues: residues 1704 to 1715 (ETPEKTTSEKPP) and 1737 to 1769 (PVEK…RPER). Position 1705 is a phosphothreonine (Thr1705). The span at 1817-1829 (GSSSDSESSPGAP) shows a compositional bias: low complexity. A Phosphoserine modification is found at Ser1925.

It is found in the nucleus. The protein localises to the postsynaptic density. It localises to the synapse. The protein resides in the synaptosome. The sequence is that of Proline-rich protein 12 from Homo sapiens (Human).